The primary structure comprises 368 residues: Metacaspase-6 (368 aa).

Catalysis depends on residues His-86 and Cys-139. Position 139 is an S-nitrosocysteine (Cys-139). The interval 153–174 (GESTKKKKDSGDSSTINKETEA) is disordered.

The protein belongs to the peptidase C14B family. Post-translationally, proteolytically processed; by an autocatalytic mechanism. As to expression, expressed in roots and flower buds.

This Arabidopsis thaliana (Mouse-ear cress) protein is Metacaspase-6 (AMC6).